The following is a 263-amino-acid chain: Indole-3-glycerol phosphate synthase (263 aa).

Belongs to the TrpC family.

It catalyses the reaction 1-(2-carboxyphenylamino)-1-deoxy-D-ribulose 5-phosphate + H(+) = (1S,2R)-1-C-(indol-3-yl)glycerol 3-phosphate + CO2 + H2O. The protein operates within amino-acid biosynthesis; L-tryptophan biosynthesis; L-tryptophan from chorismate: step 4/5. In Aliarcobacter butzleri (strain RM4018) (Arcobacter butzleri), this protein is Indole-3-glycerol phosphate synthase.